The primary structure comprises 130 residues: Large-conductance mechanosensitive channel (130 aa).

The next 2 membrane-spanning stretches (helical) occupy residues 14 to 34 (IIDL…VTSF) and 73 to 93 (FVDF…LVKF).

This sequence belongs to the MscL family. As to quaternary structure, homopentamer.

The protein localises to the cell membrane. In terms of biological role, channel that opens in response to stretch forces in the membrane lipid bilayer. May participate in the regulation of osmotic pressure changes within the cell. This chain is Large-conductance mechanosensitive channel, found in Oceanobacillus iheyensis (strain DSM 14371 / CIP 107618 / JCM 11309 / KCTC 3954 / HTE831).